We begin with the raw amino-acid sequence, 871 residues long: Coatomer subunit gamma-2 (871 aa).

Residues 1 to 11 (MIKKFDKKDEE) are compositionally biased toward basic and acidic residues. The disordered stretch occupies residues 1-21 (MIKKFDKKDEESGSGSNPFQH). 6 HEAT repeats span residues 64–101 (TEATEAFFAMTRLFQSNDQTLRRMCYLTIKEMATISED), 283–320 (RELAPAVSVLQLFCSSPKPALRYAAVRTLNKVAMKHPS), 321–355 (AVTACNLDLENLITDSNRSIATLAITTLLKTGSES), 356–392 (SVDRLMKQISSFVSEISDEFKVVVVQAISALCQKYPR), 395–430 (SVMMTFLSNMLRDDGGFEYKRAIVDCIISIVEENPE), and 467–504 (PVPSKYIRFIFNRVVLENEAVRAAAVSALAKFGAQNES). At threonine 594 the chain carries Phosphothreonine.

It belongs to the COPG family. Oligomeric complex. Binds to CDC42. Interacts with JAGN1. Interacts with TMED10 (via cytoplasmic domain).

The protein localises to the cytoplasm. The protein resides in the cytosol. Its subcellular location is the golgi apparatus membrane. It is found in the cytoplasmic vesicle. It localises to the COPI-coated vesicle membrane. Its function is as follows. The coatomer is a cytosolic protein complex that binds to dilysine motifs and reversibly associates with Golgi non-clathrin-coated vesicles, which further mediate biosynthetic protein transport from the ER, via the Golgi up to the trans Golgi network. Coatomer complex is required for budding from Golgi membranes, and is essential for the retrograde Golgi-to-ER transport of dilysine-tagged proteins. In mammals, the coatomer can only be recruited by membranes associated to ADP-ribosylation factors (ARFs), which are small GTP-binding proteins; the complex also influences the Golgi structural integrity, as well as the processing, activity, and endocytic recycling of LDL receptors. The protein is Coatomer subunit gamma-2 (COPG2) of Homo sapiens (Human).